A 913-amino-acid chain; its full sequence is Calcium-activated chloride channel regulator 1 (913 aa).

Residues Met-1–Ser-21 form the signal peptide. A metalloprotease domain region spans residues Asp-46–Lys-199. His-156 contacts Zn(2+). Residue Glu-157 is part of the active site. Positions 160 and 167 each coordinate Zn(2+). Positions Ile-306–Leu-475 constitute a VWFA domain. 8 N-linked (GlcNAc...) asparagine glycosylation sites follow: Asn-503, Asn-769, Asn-803, Asn-809, Asn-830, Asn-835, Asn-885, and Asn-889. A disordered region spans residues Pro-866–Asn-885.

It belongs to the CLCR family. Glycosylated. Post-translationally, the translation product is autoproteolytically cleaved by the metalloprotease domain in the endoplasmic reticulum into a N-terminal and a C-terminal products that remain physically associated with each other. The cleavage is necessary for calcium-activated chloride channel (CaCC) activation activity.

The protein resides in the secreted. The protein localises to the extracellular space. Its function is as follows. May be involved in mediating calcium-activated chloride conductance. May play critical roles in goblet cell metaplasia, mucus hypersecretion, cystic fibrosis and AHR. May be involved in the regulation of mucus production and/or secretion by goblet cells. Involved in the regulation of tissue inflammation in the innate immune response. May play a role as a tumor suppressor. Induces MUC5AC. The sequence is that of Calcium-activated chloride channel regulator 1 (CLCA1) from Macaca mulatta (Rhesus macaque).